The chain runs to 177 residues: ATP synthase subunit delta (177 aa).

The protein belongs to the ATPase delta chain family. In terms of assembly, F-type ATPases have 2 components, F(1) - the catalytic core - and F(0) - the membrane proton channel. F(1) has five subunits: alpha(3), beta(3), gamma(1), delta(1), epsilon(1). F(0) has three main subunits: a(1), b(2) and c(10-14). The alpha and beta chains form an alternating ring which encloses part of the gamma chain. F(1) is attached to F(0) by a central stalk formed by the gamma and epsilon chains, while a peripheral stalk is formed by the delta and b chains.

The protein resides in the cell inner membrane. Functionally, f(1)F(0) ATP synthase produces ATP from ADP in the presence of a proton or sodium gradient. F-type ATPases consist of two structural domains, F(1) containing the extramembraneous catalytic core and F(0) containing the membrane proton channel, linked together by a central stalk and a peripheral stalk. During catalysis, ATP synthesis in the catalytic domain of F(1) is coupled via a rotary mechanism of the central stalk subunits to proton translocation. In terms of biological role, this protein is part of the stalk that links CF(0) to CF(1). It either transmits conformational changes from CF(0) to CF(1) or is implicated in proton conduction. This is ATP synthase subunit delta from Pasteurella multocida (strain Pm70).